The sequence spans 372 residues: MEPVPCLLLLLLPLLRASTDTPEPCELDDDDIRCVCNFSDPQPDWSSALQCMPAVQVEMWGGGHSLEQFLRQADLYTDQRRYADVVKALRVRRLTVGAVQVPAPLLLGVLRVLGYSRLKELALEDIEVTGTAPPPPPLEATGPALSTLSLRNVSWPKGGAWLSELQQWLKPGLQVLNIAQAHTLAFSCEQVRTFSALTTLDLSENPGLGERGLVAALCPHKFPALQDLALRNAGMKTLQGVCAALAEAGVQPHHLDLSHNSLRADTQRCIWPSALNSLNLSFTGLQQVPKGLPAKLNVLDLSCNKLNRAPQPGELPKVVNLSLDGNPFLVPGASKLQEDLTNSGVFPACPPSPLAMGMSGTLALLQGARGFI.

The signal sequence occupies residues 1 to 17 (MEPVPCLLLLLLPLLRA). 2 disulfides stabilise this stretch: C25–C36 and C34–C51. N37 carries N-linked (GlcNAc...) asparagine glycosylation. 11 LRR repeats span residues 54–82 (AVQVEMWGGGHSLEQFLRQADLYTDQRRY), 83–118 (ADVVKALRVRRLTVGAVQVPAPLLLGVLRVLGYSRL), 119–145 (KELALEDIEVTGTAPPPPPLEATGPAL), 146–173 (STLSLRNVSWPKGGAWLSELQQWLKPGL), 174–197 (QVLNIAQAHTLAFSCEQVRTFSAL), 198–225 (TTLDLSENPGLGERGLVAALCPHKFPAL), 226–252 (QDLALRNAGMKTLQGVCAALAEAGVQP), 253–275 (HHLDLSHNSLRADTQRCIWPSAL), 276–296 (NSLNLSFTGLQQVPKGLPAKL), 297–318 (NVLDLSCNKLNRAPQPGELPKV), and 319–346 (VNLSLDGNPFLVPGASKLQEDLTNSGVF). N152 carries an N-linked (GlcNAc...) asparagine glycan. Disulfide bonds link C188–C218 and C242–C269. N279 carries an N-linked (GlcNAc...) asparagine glycan. The segment at 287-372 (QVPKGLPAKL…ALLQGARGFI (86 aa)) is required for response to bacterial lipopolysaccharide (LPS). N320 carries N-linked (GlcNAc...) asparagine glycosylation. N342 is lipidated: GPI-anchor amidated asparagine. Residues 343-372 (SGVFPACPPSPLAMGMSGTLALLQGARGFI) constitute a propeptide, removed in mature form.

In terms of assembly, belongs to the lipopolysaccharide (LPS) receptor, a multi-protein complex containing at least CD14, LY96 and TLR4. Interacts with LPS-bound LPB. Interacts with LPAR1. Interacts with the TLR2:TLR6 or TLR2:TLR1 heterodimers; upon interaction with ligands such as diacylated lipopeptides and triacylated lipopeptides, respectively. Interacts with MYO18A. Interacts with FSTL1.

It is found in the cell membrane. It localises to the secreted. The protein localises to the membrane raft. The protein resides in the golgi apparatus. Its function is as follows. Coreceptor for bacterial lipopolysaccharide. In concert with LBP, binds to monomeric lipopolysaccharide and delivers it to the LY96/TLR4 complex, thereby mediating the innate immune response to bacterial lipopolysaccharide (LPS). Acts via MyD88, TIRAP and TRAF6, leading to NF-kappa-B activation, cytokine secretion and the inflammatory response. Acts as a coreceptor for TLR2:TLR6 heterodimer in response to diacylated lipopeptides and for TLR2:TLR1 heterodimer in response to triacylated lipopeptides, these clusters trigger signaling from the cell surface and subsequently are targeted to the Golgi in a lipid-raft dependent pathway. Binds electronegative LDL (LDL(-)) and mediates the cytokine release induced by LDL(-). The chain is Monocyte differentiation antigen CD14 (CD14) from Oryctolagus cuniculus (Rabbit).